The sequence spans 346 residues: Elongation factor 1-alpha (346 aa).

The tr-type G domain occupies 1–127 (GTSQADVALL…DNVEPPKRPS (127 aa)). 49–52 (NKMD) provides a ligand contact to GTP.

This sequence belongs to the TRAFAC class translation factor GTPase superfamily. Classic translation factor GTPase family. EF-Tu/EF-1A subfamily.

Its subcellular location is the cytoplasm. In terms of biological role, this protein promotes the GTP-dependent binding of aminoacyl-tRNA to the A-site of ribosomes during protein biosynthesis. The protein is Elongation factor 1-alpha of Eimeria bovis.